We begin with the raw amino-acid sequence, 307 residues long: Woronin sorting complex protein (307 aa).

The next 3 membrane-spanning stretches (helical) occupy residues 106–125 (MATYGALVSAPLGHFLIWIL), 146–167 (NLIVAPIQNSVYLVAMAIIAGA), and 207–227 (AWMPFFNLVSFFIGTYINYIT). Residues 241 to 264 (GDGAHGDHRHDRERERDRERERHS) are compositionally biased toward basic and acidic residues. Positions 241-307 (GDGAHGDHRH…YPSLGQNPRY (67 aa)) are disordered. A compositionally biased stretch (low complexity) spans 266 to 278 (PPHGHGPSHGGRP).

It belongs to the peroxisomal membrane protein PXMP2/4 family. Self-assembles into detergent-resistant oligomers and forms a complex with hex-1 assemblies.

Its subcellular location is the peroxisome membrane. It localises to the cell septum. In terms of biological role, woronin sorting complex protein involved in both Woronin bodies (WB) formation and inherence. Localizes to large peroxisome membranes where it self-assembles into detergent-resistant oligomers that envelop hex-1 assemblies, producing asymmetrical nascent WBs. These structures are then delivered to the cell cortex, which permits partitioning of the nascent WB and WB inheritance. The sequence is that of Woronin sorting complex protein from Neurospora crassa (strain ATCC 24698 / 74-OR23-1A / CBS 708.71 / DSM 1257 / FGSC 987).